The following is a 151-amino-acid chain: Flavodoxin YqcA (151 aa).

The region spanning 4–145 (IGIFVGTVYG…ISCPWVEAWA (142 aa)) is the Flavodoxin-like domain. FMN is bound by residues 10–15 (TVYGNA) and 99–101 (NFC).

Belongs to the flavodoxin family. MioC subfamily. As to quaternary structure, monomer. It depends on FMN as a cofactor.

Probable electron transporter. The sequence is that of Flavodoxin YqcA from Pectobacterium carotovorum subsp. carotovorum (Erwinia carotovora subsp. carotovora).